A 218-amino-acid chain; its full sequence is Probable transaldolase (218 aa).

Residue Lys87 is the Schiff-base intermediate with substrate of the active site.

It belongs to the transaldolase family. Type 3B subfamily.

The protein resides in the cytoplasm. It carries out the reaction D-sedoheptulose 7-phosphate + D-glyceraldehyde 3-phosphate = D-erythrose 4-phosphate + beta-D-fructose 6-phosphate. Its pathway is carbohydrate degradation; pentose phosphate pathway; D-glyceraldehyde 3-phosphate and beta-D-fructose 6-phosphate from D-ribose 5-phosphate and D-xylulose 5-phosphate (non-oxidative stage): step 2/3. Functionally, transaldolase is important for the balance of metabolites in the pentose-phosphate pathway. In Bacteroides fragilis (strain ATCC 25285 / DSM 2151 / CCUG 4856 / JCM 11019 / LMG 10263 / NCTC 9343 / Onslow / VPI 2553 / EN-2), this protein is Probable transaldolase.